Consider the following 340-residue polypeptide: Phenylalanine--tRNA ligase alpha subunit (340 aa).

A Mg(2+)-binding site is contributed by glutamate 258.

It belongs to the class-II aminoacyl-tRNA synthetase family. Phe-tRNA synthetase alpha subunit type 1 subfamily. Tetramer of two alpha and two beta subunits. Mg(2+) serves as cofactor.

The protein resides in the cytoplasm. The enzyme catalyses tRNA(Phe) + L-phenylalanine + ATP = L-phenylalanyl-tRNA(Phe) + AMP + diphosphate + H(+). This is Phenylalanine--tRNA ligase alpha subunit from Corynebacterium glutamicum (strain ATCC 13032 / DSM 20300 / JCM 1318 / BCRC 11384 / CCUG 27702 / LMG 3730 / NBRC 12168 / NCIMB 10025 / NRRL B-2784 / 534).